A 212-amino-acid chain; its full sequence is Glycerol-3-phosphate acyltransferase (212 aa).

Helical transmembrane passes span 9–29, 67–87, 95–115, 128–148, and 168–190; these read AACLVPVILTALLLLAIGYLL, GPALVVFLIDVGKGALAVLLA, WLQVLAGLAALAGHIWPVWLG, MFLGLAWPVGLACFGLFMAVI, and LMVVSGGSSAYVVVSLVASLMVL.

Belongs to the PlsY family. In terms of assembly, probably interacts with PlsX.

The protein localises to the cell inner membrane. It catalyses the reaction an acyl phosphate + sn-glycerol 3-phosphate = a 1-acyl-sn-glycero-3-phosphate + phosphate. The protein operates within lipid metabolism; phospholipid metabolism. Catalyzes the transfer of an acyl group from acyl-phosphate (acyl-PO(4)) to glycerol-3-phosphate (G3P) to form lysophosphatidic acid (LPA). This enzyme utilizes acyl-phosphate as fatty acyl donor, but not acyl-CoA or acyl-ACP. The chain is Glycerol-3-phosphate acyltransferase from Parasynechococcus marenigrum (strain WH8102).